Consider the following 628-residue polypeptide: Chaperone protein DnaK (628 aa).

Thr-195 carries the phosphothreonine; by autocatalysis modification. The disordered stretch occupies residues 545 to 628 (QLEENEGAAQ…VIDADFKAAE (84 aa)). Basic and acidic residues predominate over residues 555 to 591 (DAKDALKAAADEAEEAVRSEDDARIESAQKRLEEELR). Over residues 596 to 612 (AQQAAGQGQPQGAQAQG) the composition is skewed to low complexity. Residues 614–628 (KADDDVIDADFKAAE) are compositionally biased toward basic and acidic residues.

It belongs to the heat shock protein 70 family.

Functionally, acts as a chaperone. In Deinococcus deserti (strain DSM 17065 / CIP 109153 / LMG 22923 / VCD115), this protein is Chaperone protein DnaK.